The primary structure comprises 246 residues: Tyrosine recombinase XerD-like (246 aa).

Positions 1–72 (MINDINNFIE…AVNQFLFFLY (72 aa)) constitute a Core-binding (CB) domain. A Tyr recombinase domain is found at 84 to 246 (QETEKITLAQ…TPITLERYYR (163 aa)). Active-site residues include Lys-149 and Arg-212. Catalysis depends on Tyr-244, which acts as the O-(3'-phospho-DNA)-tyrosine intermediate.

Belongs to the 'phage' integrase family. XerD-like subfamily.

Its subcellular location is the cytoplasm. Its function is as follows. Putative tyrosine recombinase. Not involved in the cutting and rejoining of the recombining DNA molecules on dif(SL) site. In Streptococcus agalactiae serotype V (strain ATCC BAA-611 / 2603 V/R), this protein is Tyrosine recombinase XerD-like.